The chain runs to 224 residues: Ribose-5-phosphate isomerase A (224 aa).

Substrate contacts are provided by residues 32-35 (TGST), 85-88 (DGAD), and 98-101 (KGGG). The active-site Proton acceptor is Glu-107. Substrate is bound at residue Lys-125.

Belongs to the ribose 5-phosphate isomerase family. As to quaternary structure, homodimer.

The catalysed reaction is aldehydo-D-ribose 5-phosphate = D-ribulose 5-phosphate. It participates in carbohydrate degradation; pentose phosphate pathway; D-ribose 5-phosphate from D-ribulose 5-phosphate (non-oxidative stage): step 1/1. Its function is as follows. Catalyzes the reversible conversion of ribose-5-phosphate to ribulose 5-phosphate. The protein is Ribose-5-phosphate isomerase A of Pseudomonas fluorescens (strain Pf0-1).